A 140-amino-acid chain; its full sequence is uncharacterized protein (140 aa).

3 helical membrane passes run 42–62, 65–85, and 96–116; these read AFLFNFLPLLLLLAFLDIFAS, ASFLAAVLIKILVKSVFSALG, and RASDCLAALEFFDIFLAMLCF.

It is found in the membrane. This is an uncharacterized protein from Saccharomyces cerevisiae (strain ATCC 204508 / S288c) (Baker's yeast).